The primary structure comprises 132 residues: Small ribosomal subunit protein uS8 (132 aa).

This sequence belongs to the universal ribosomal protein uS8 family. As to quaternary structure, part of the 30S ribosomal subunit. Contacts proteins S5 and S12.

Its function is as follows. One of the primary rRNA binding proteins, it binds directly to 16S rRNA central domain where it helps coordinate assembly of the platform of the 30S subunit. This Paracoccus denitrificans (strain Pd 1222) protein is Small ribosomal subunit protein uS8.